Consider the following 227-residue polypeptide: NAD(P)H-quinone oxidoreductase subunit K, chloroplastic (227 aa).

[4Fe-4S] cluster is bound by residues Cys43, Cys44, Cys108, and Cys139.

This sequence belongs to the complex I 20 kDa subunit family. NDH is composed of at least 16 different subunits, 5 of which are encoded in the nucleus. The cofactor is [4Fe-4S] cluster.

Its subcellular location is the plastid. It is found in the chloroplast thylakoid membrane. The enzyme catalyses a plastoquinone + NADH + (n+1) H(+)(in) = a plastoquinol + NAD(+) + n H(+)(out). It catalyses the reaction a plastoquinone + NADPH + (n+1) H(+)(in) = a plastoquinol + NADP(+) + n H(+)(out). NDH shuttles electrons from NAD(P)H:plastoquinone, via FMN and iron-sulfur (Fe-S) centers, to quinones in the photosynthetic chain and possibly in a chloroplast respiratory chain. The immediate electron acceptor for the enzyme in this species is believed to be plastoquinone. Couples the redox reaction to proton translocation, and thus conserves the redox energy in a proton gradient. The polypeptide is NAD(P)H-quinone oxidoreductase subunit K, chloroplastic (Pelargonium hortorum (Common geranium)).